The primary structure comprises 320 residues: Putative membrane-bound redox modulator Alx (320 aa).

Residues 1–6 lie on the Periplasmic side of the membrane; the sequence is MNTVGT. Residues 7–27 traverse the membrane as a helical segment; it reads PLLWGGFAVVVAIMLAIDLLL. Over 28 to 43 the chain is Cytoplasmic; sequence QGRRGAHAMTMKQAAA. Residues 44 to 64 traverse the membrane as a helical segment; the sequence is WSLVWVTLSLLFNAAFWWYLV. Residues 65 to 89 are Periplasmic-facing; sequence QTEGRAVADPQALAFLTGYLIEKSL. Residues 90-110 form a helical membrane-spanning segment; that stretch reads AVDNVFVWLMLFSYFSVPAAL. Over 111-113 the chain is Cytoplasmic; it reads QRR. Residues 114–134 form a helical membrane-spanning segment; that stretch reads VLVYGVLGAIVLRTIMIFTGS. A topological domain (periplasmic) is located at residue Trp-135. A helical transmembrane segment spans residues 136-156; the sequence is LISQFDWILYIFGAFLLFTGV. Over 157–198 the chain is Cytoplasmic; sequence KMALAHEDESGIGDKPLVRWLRGHLRMTDTIDNEHFFVRKNG. A helical membrane pass occupies residues 199–219; sequence LLYATPLMLVLILVELSDVIF. Residues 220 to 225 lie on the Periplasmic side of the membrane; the sequence is AVDSIP. A helical transmembrane segment spans residues 226–246; that stretch reads AIFAVTTDPFIVLTSNLFAIL. The Cytoplasmic segment spans residues 247–261; that stretch reads GLRAMYFLLAGVAER. Residues 262–282 form a helical membrane-spanning segment; it reads FSMLKYGLAVILVFIGIKMLI. The Periplasmic portion of the chain corresponds to 283–286; sequence VDFY. The helical transmembrane segment at 287 to 307 threads the bilayer; that stretch reads HIPIAVSLGVVFGILVMTFII. Residues 308–320 are Cytoplasmic-facing; sequence NAWVNYRHDKQRG.

This sequence belongs to the TerC family.

The protein resides in the cell inner membrane. Has been proposed to be a redox modulator. This Shigella flexneri protein is Putative membrane-bound redox modulator Alx (alx).